The sequence spans 527 residues: Zinc finger CCCH-type with G patch domain-containing protein (527 aa).

The disordered stretch occupies residues 97–126 (GEVSGSSSDMREREDEREEEDDGEVEGEVD). Over residues 111–125 (DEREEEDDGEVEGEV) the composition is skewed to acidic residues. The C3H1-type zinc finger occupies 173 to 200 (QKSMKPCPFFLEDKCRFADNCRFSHGEV). The interval 268-312 (LREDDLPSCSDSEDDDNGEGEAAFPRVLTQEEDWAPSRSSSAFGG) is disordered. The G-patch domain occupies 317-363 (TRGIGSKLMLKMGYEYGKGLGKTSEGRVEPVLAVVLPKGKSLDQCAE). Disordered stretches follow at residues 369–396 (TQRK…AHNT), 410–444 (LGNG…YKGG), and 505–527 (KAQE…MTEF). Over residues 384–393 (RNKRTRKARA) the composition is skewed to basic residues. Residues 511 to 527 (AQRENRKADTHKKMTEF) show a composition bias toward basic and acidic residues.

The protein resides in the nucleus. Functionally, transcription repressor that specifically binds the 5'-GGAG[GA]A[GA]A-3' consensus sequence. Represses transcription by recruiting the chromatin multiprotein complex NuRD to target promoters. Negatively regulates expression of EGFR, a gene involved in cell proliferation, survival and migration. This Salmo salar (Atlantic salmon) protein is Zinc finger CCCH-type with G patch domain-containing protein (zgpat).